Consider the following 237-residue polypeptide: tRNA (guanine-N(1)-)-methyltransferase (237 aa).

S-adenosyl-L-methionine is bound by residues glycine 112 and 132–137 (IGDFVL).

This sequence belongs to the RNA methyltransferase TrmD family. Homodimer.

It localises to the cytoplasm. The enzyme catalyses guanosine(37) in tRNA + S-adenosyl-L-methionine = N(1)-methylguanosine(37) in tRNA + S-adenosyl-L-homocysteine + H(+). In terms of biological role, specifically methylates guanosine-37 in various tRNAs. The protein is tRNA (guanine-N(1)-)-methyltransferase of Thermosynechococcus vestitus (strain NIES-2133 / IAM M-273 / BP-1).